A 174-amino-acid chain; its full sequence is Micrococcal nuclease (174 aa).

The first 23 residues, 1–23 (MKSALAALRAVAAAVVLIVSVPA), serve as a signal peptide directing secretion. Active-site residues include arginine 52, glutamate 60, and arginine 94.

It belongs to the thermonuclease family.

It catalyses the reaction Endonucleolytic cleavage to nucleoside 3'-phosphates and 3'-phosphooligonucleotide end-products.. In Shigella flexneri, this protein is Micrococcal nuclease (nuc).